The sequence spans 164 residues: Putative pre-16S rRNA nuclease (164 aa).

It belongs to the YqgF nuclease family.

The protein localises to the cytoplasm. Functionally, could be a nuclease involved in processing of the 5'-end of pre-16S rRNA. This chain is Putative pre-16S rRNA nuclease, found in Rhizobium etli (strain CIAT 652).